Here is a 135-residue protein sequence, read N- to C-terminus: Transcriptional regulator HosA (135 aa).

Residues R4–N134 enclose the HTH marR-type domain. The H-T-H motif DNA-binding region spans Q48–N71.

Its function is as follows. Involved in the temperature-dependent positive control of flagellum-driven swimming motility and cellular aggregation. Regulates fliC expression by directly interacting with fliC promoter. This chain is Transcriptional regulator HosA (hosA), found in Escherichia coli O157:H7.